The sequence spans 804 residues: Probable basic-leucine zipper transcription factor C (804 aa).

2 disordered regions span residues 86 to 148 (FISP…NDIN) and 275 to 371 (YGNV…PKKR). Low complexity predominate over residues 90-145 (NNNNNNNNNNNNNNNNNNNNNNNNNNNNNNNNNNNNNNNNNNNNNNNNNNNNNNNN). Residues 275–291 (YGNVSDNSSPETNFSYA) show a composition bias toward polar residues. Residues 292 to 334 (SPSSPSSTQSQSSPYEQQPLSPNPTISLSSSISVTATTTTRPN) show a composition bias toward low complexity. Over residues 335-356 (ATEKTKESSLKSKSKSNEKDKE) the composition is skewed to basic and acidic residues. In terms of domain architecture, bZIP spans 415–478 (ALNYQFRKIK…DQYKLQEKQK (64 aa)). The basic motif stretch occupies residues 421–436 (RKIKNRESARRSRERK). Residues 443–450 (LEAKIAEI) form a leucine-zipper region. The segment at 670-693 (KNCNNNNENNNNNDNNKNSDDEKG) is disordered. The segment covering 672 to 685 (CNNNNENNNNNDNN) has biased composition (low complexity).

It belongs to the bZIP family.

The protein localises to the nucleus. In terms of biological role, probable transcriptional regulator. The chain is Probable basic-leucine zipper transcription factor C (bzpC) from Dictyostelium discoideum (Social amoeba).